The primary structure comprises 267 residues: Placental prolactin-related protein 2 (267 aa).

N-linked (GlcNAc...) asparagine glycosylation is found at Asn99 and Asn121. Cystine bridges form between Cys126/Cys244 and Cys261/Cys267.

Belongs to the somatotropin/prolactin family.

It is found in the secreted. Placental prolactin-related proteins may play a specific role during gestation. The sequence is that of Placental prolactin-related protein 2 (PRP2) from Bos taurus (Bovine).